Here is a 349-residue protein sequence, read N- to C-terminus: Insulin gene enhancer protein isl-1 (349 aa).

LIM zinc-binding domains lie at 17–70 and 79–133; these read CVGC…CKRD and CAKC…RADH. Positions 181-240 form a DNA-binding region, homeobox; it reads TTRVRTVLNEKQLHTLRTCYNANPRPDALMKEQLVEMTGLSPRVIRVWFQNKRCKDKKRS. Residues 312-349 are disordered; that stretch reads VNFSEGGPGSNSTGSEVASMSSQLPDTPNSMVASPIEA. Residues 321–343 show a composition bias toward polar residues; it reads SNSTGSEVASMSSQLPDTPNSMV.

Its subcellular location is the nucleus. Its function is as follows. DNA-binding transcriptional activator. Recognizes and binds to the consensus octamer binding site 5'-ATAATTAA-3' in promoter of target genes. Plays a fundamental role in the gene regulatory network essential for retinal ganglion cell (RGC) differentiation. May be involved in subtype specialization of primary motoneurons. May bind to insulin gene enhancer sequences. Essential for heart development. The polypeptide is Insulin gene enhancer protein isl-1 (isl1) (Danio rerio (Zebrafish)).